The sequence spans 129 residues: ATP synthase epsilon chain (129 aa).

This sequence belongs to the ATPase epsilon chain family. In terms of assembly, F-type ATPases have 2 components, CF(1) - the catalytic core - and CF(0) - the membrane proton channel. CF(1) has five subunits: alpha(3), beta(3), gamma(1), delta(1), epsilon(1). CF(0) has three main subunits: a, b and c.

It is found in the cell inner membrane. In terms of biological role, produces ATP from ADP in the presence of a proton gradient across the membrane. This Campylobacter jejuni subsp. doylei (strain ATCC BAA-1458 / RM4099 / 269.97) protein is ATP synthase epsilon chain.